A 448-amino-acid polypeptide reads, in one-letter code: Hydroxycinnamoyl-CoA:piscidic acid hydroxycinnamoyltransferase (448 aa).

Residues histidine 153 and aspartate 395 each act as proton acceptor in the active site.

The protein belongs to the plant acyltransferase family. Highly expressed in root and rhizome. Expressed in senescent leaf and callus tissues. Expressed in detached leaf treated for 18 hours with ethephon, methyl jasmonate, salicylic acid or illuminated for 24 hours with UV light. Not expressed in mature leaf. Expressed at low levels in leaves and flowers.

It catalyses the reaction (2R,3S)-piscidate + (E)-4-coumaroyl-CoA = cimicifugate K + CoA. The enzyme catalyses (2R,3S)-piscidate + (E)-caffeoyl-CoA = cimicifugate D + CoA. The catalysed reaction is (2R,3S)-piscidate + (E)-sinapoyl-CoA = cimicifugate J + CoA. It carries out the reaction (2R,3S)-piscidate + (E)-feruloyl-CoA = cimicifugate E + CoA. It participates in phenylpropanoid metabolism. Catalyzes the formation of cimicifugic acids. Uses hydroxycinnamoyl-CoA thioesters as hydroxycinnamoyl donor substrates. Has a strict specificity for piscidic acid as an acceptor substrate as none of the various other acceptors tested including 4-hydroxyphenyllactic acid, malate, spermidine or tetrahydroxyhexanedioic acid are substrates. Donor substrates include 4-coumaroyl-CoA, caffeoyl-CoA, sinapoyl-CoA and feruloyl-CoA. No activity with cinnamoyl-CoA, isoferuloyl-CoA, 3,4-dimethoxycinnamoyl-CoA or 3,4-dihydroxybenzoyl-CoA as donors. In the reverse reaction with fukinolic acid and CoA as substrates, a formation of fukiic acid is evident. Hence, fukiic acid may also serve as an acceptor substrate. Involved in the biosynthesis of cimicifugic and possibly fukinolic acids. The protein is Hydroxycinnamoyl-CoA:piscidic acid hydroxycinnamoyltransferase of Actaea racemosa (Black cohosh).